The chain runs to 66 residues: Large ribosomal subunit protein bL31 (66 aa).

4 residues coordinate Zn(2+): cysteine 16, cysteine 18, cysteine 36, and cysteine 39.

Belongs to the bacterial ribosomal protein bL31 family. Type A subfamily. Part of the 50S ribosomal subunit. The cofactor is Zn(2+).

Functionally, binds the 23S rRNA. This is Large ribosomal subunit protein bL31 from Campylobacter hominis (strain ATCC BAA-381 / DSM 21671 / CCUG 45161 / LMG 19568 / NCTC 13146 / CH001A).